The primary structure comprises 613 residues: Forkhead box protein O (613 aa).

Disordered stretches follow at residues Arg-39–Ser-90, Lys-182–Lys-205, Gly-217–Pro-269, and Gln-317–Gly-360. Position 44 is a phosphothreonine; by PKB/AKT1 (Thr-44). Residues Thr-63–Gln-80 are compositionally biased toward polar residues. Ser-75 carries the post-translational modification Phosphoserine. A compositionally biased stretch (low complexity) spans Asn-81–Ser-90. Residues Trp-95 to Gly-201 constitute a DNA-binding region (fork-head). The residue at position 190 (Ser-190) is a Phosphoserine; by PKB/AKT1. Composition is skewed to polar residues over residues Ala-221–Ser-230 and Arg-256–Gly-265. Ser-259 is modified (phosphoserine; by PKB/AKT1). Ser-262, Ser-263, and Ser-268 each carry phosphoserine. Residues Ser-327–Pro-336 show a composition bias toward pro residues. Low complexity predominate over residues Pro-337–Ala-353.

Interacts with melt.

It localises to the cytoplasm. The protein localises to the nucleus. Its function is as follows. Transcription factor involved in the regulation of the insulin signaling pathway. Consistently activates both the downstream target Thor\d4EBP and the feedback control target InR. Involved in negative regulation of the cell cycle, modulating cell growth and proliferation. In response to cellular stresses, such as nutrient deprivation or increased levels of reactive oxygen species, foxo is activated and inhibits growth through the action of target genes such as Thor. Foxo activated in the adult fat body can regulate lifespan in adults; an insulin peptide itself may function as one secondary messenger of insulin-regulated aging. Also regulates Lip4, homolog of human acid lipases, thereby acting as a key modulator of lipid metabolism by insulin signaling and integrates insulin responses to glucose and lipid homeostasis. The polypeptide is Forkhead box protein O (Drosophila melanogaster (Fruit fly)).